Here is a 121-residue protein sequence, read N- to C-terminus: Heimdall profilin (121 aa).

It belongs to the Asgard profilin family.

It localises to the cytoplasm. It is found in the cytoskeleton. Its function is as follows. Binds to actin and affects the structure of the cytoskeleton. At high concentrations inhibits spontaneous rabbit actin nucleation. This strongly suggests this archaea has a profilin-regulated actin system, and actin-type genes can be identified in this organism. The chain is Heimdall profilin from Heimdallarchaeota archaeon (strain LC_2).